A 484-amino-acid polypeptide reads, in one-letter code: Glutamate--tRNA ligase (484 aa).

The 'HIGH' region motif lies at 11-21 (PSPTGYLHIGN). The short motif at 252–256 (KLSKR) is the 'KMSKS' region element. Lys-255 provides a ligand contact to ATP.

The protein belongs to the class-I aminoacyl-tRNA synthetase family. Glutamate--tRNA ligase type 1 subfamily. Monomer.

Its subcellular location is the cytoplasm. The enzyme catalyses tRNA(Glu) + L-glutamate + ATP = L-glutamyl-tRNA(Glu) + AMP + diphosphate. In terms of biological role, catalyzes the attachment of glutamate to tRNA(Glu) in a two-step reaction: glutamate is first activated by ATP to form Glu-AMP and then transferred to the acceptor end of tRNA(Glu). The polypeptide is Glutamate--tRNA ligase (Staphylococcus aureus (strain Mu3 / ATCC 700698)).